The following is a 363-amino-acid chain: MTVTGIIAEFNPFHNGHKYLLEQASGLKIIAMSGNFVQRGEPAIVDKWTRAQMALEAGADLVLELPFLVSVQAADFFAKGAVDILERLDIEQLTFGTEEVLDYESISKVYGQKAEQMEAYLAGLPDSLSYPQKTQAMWQEFAGLNFSGSTPNHILGLAYSKAVAVKNIKLCPIQRQGAGYHSLSANQEFASATALRQNLDQPDFLKKFTPVHHLLETAPKVTWSDLFPYLRYQIVTCPDLTSFYQVNQELAVRIREALKSSETIEELVEQVATKRYTKARIRRLLTYILVGARQEEVPSGIHILGFSEQGRQHLSQLKGKVELVSRIGKKPWDSLTQQADKVYQLGNPALKEQNFGRVPVILL.

ATP is bound by residues 7–20, Gly-96, Asn-152, and Arg-175; that span reads IAEF…HKYL.

It belongs to the TmcAL family.

Its subcellular location is the cytoplasm. It carries out the reaction cytidine(34) in elongator tRNA(Met) + acetate + ATP = N(4)-acetylcytidine(34) in elongator tRNA(Met) + AMP + diphosphate. In terms of biological role, catalyzes the formation of N(4)-acetylcytidine (ac(4)C) at the wobble position of elongator tRNA(Met), using acetate and ATP as substrates. First activates an acetate ion to form acetyladenylate (Ac-AMP) and then transfers the acetyl group to tRNA to form ac(4)C34. This chain is tRNA(Met) cytidine acetate ligase, found in Streptococcus gordonii (strain Challis / ATCC 35105 / BCRC 15272 / CH1 / DL1 / V288).